We begin with the raw amino-acid sequence, 279 residues long: Putative carbamate hydrolase RutD (279 aa).

Residues 23–126 (PVVVLISGLG…LVSVNGWLRI (104 aa)) form the AB hydrolase-1 domain.

It belongs to the AB hydrolase superfamily. Hydrolase RutD family.

It catalyses the reaction carbamate + 2 H(+) = NH4(+) + CO2. In terms of biological role, involved in pyrimidine catabolism. May facilitate the hydrolysis of carbamate, a reaction that can also occur spontaneously. The polypeptide is Putative carbamate hydrolase RutD (Escherichia coli O17:K52:H18 (strain UMN026 / ExPEC)).